Here is a 353-residue protein sequence, read N- to C-terminus: Protein RecA (353 aa).

Gly64–Thr71 serves as a coordination point for ATP. The segment at Leu331–Glu353 is disordered. A compositionally biased stretch (basic and acidic residues) spans Ser335–Lys346.

The protein belongs to the RecA family.

It localises to the cytoplasm. In terms of biological role, can catalyze the hydrolysis of ATP in the presence of single-stranded DNA, the ATP-dependent uptake of single-stranded DNA by duplex DNA, and the ATP-dependent hybridization of homologous single-stranded DNAs. It interacts with LexA causing its activation and leading to its autocatalytic cleavage. This chain is Protein RecA, found in Macrococcus caseolyticus (strain JCSC5402) (Macrococcoides caseolyticum).